Here is a 797-residue protein sequence, read N- to C-terminus: Inactive dipeptidyl peptidase 10 (797 aa).

A disordered region spans residues 1–28 (MKQEQQPTPGARATQSQPADQELGSNSP). The Cytoplasmic portion of the chain corresponds to 1–34 (MKQEQQPTPGARATQSQPADQELGSNSPPQRNWK). The chain crosses the membrane as a helical; Signal-anchor for type II membrane protein span at residues 35–55 (GIAIALLVILVVCSLITMSVI). At 56–797 (LLTPDELTNS…VLPQEPEEDE (742 aa)) the chain is on the extracellular side. Asparagine 64, asparagine 91, asparagine 112, and asparagine 120 each carry an N-linked (GlcNAc...) asparagine glycan. Tyrosine 139 and tyrosine 144 each carry phosphotyrosine. Asparagine 258, asparagine 343, asparagine 518, and asparagine 749 each carry an N-linked (GlcNAc...) asparagine glycan.

This sequence belongs to the peptidase S9B family. DPPIV subfamily. May form oligomers. Interacts with KCND1 and KCND2. In terms of processing, N-glycosylation is important for cell surface expression, specially at Asn-258, which is crucial. Detected in brain cortex (at protein level). Expressed in the brain, predominantly by neurons and not by glia.

Its subcellular location is the cell membrane. In terms of biological role, promotes cell surface expression of the potassium channel KCND2. Modulates the activity and gating characteristics of the potassium channel KCND2. Has no dipeptidyl aminopeptidase activity. The protein is Inactive dipeptidyl peptidase 10 (Dpp10) of Mus musculus (Mouse).